We begin with the raw amino-acid sequence, 220 residues long: tRNA (guanine-N(7)-)-methyltransferase (220 aa).

S-adenosyl-L-methionine-binding residues include Glu46, Asp71, Asp100, and Asp122. The active site involves Asp122. Substrate-binding positions include Lys126, Asp158, and 196 to 199; that span reads TEYE.

It belongs to the class I-like SAM-binding methyltransferase superfamily. TrmB family.

It catalyses the reaction guanosine(46) in tRNA + S-adenosyl-L-methionine = N(7)-methylguanosine(46) in tRNA + S-adenosyl-L-homocysteine. It functions in the pathway tRNA modification; N(7)-methylguanine-tRNA biosynthesis. Functionally, catalyzes the formation of N(7)-methylguanine at position 46 (m7G46) in tRNA. The chain is tRNA (guanine-N(7)-)-methyltransferase from Malacoplasma penetrans (strain HF-2) (Mycoplasma penetrans).